Reading from the N-terminus, the 190-residue chain is FMN reductase (NADH) RutF (190 aa).

Belongs to the non-flavoprotein flavin reductase family. RutF subfamily.

The catalysed reaction is FMNH2 + NAD(+) = FMN + NADH + 2 H(+). In terms of biological role, catalyzes the reduction of FMN to FMNH2 which is used to reduce pyrimidine by RutA via the Rut pathway. The polypeptide is FMN reductase (NADH) RutF (Pantoea ananatis (strain LMG 20103)).